Consider the following 219-residue polypeptide: Large ribosomal subunit protein uL3 (219 aa).

A disordered region spans residues 140 to 163 (SASHGAHRNHRKPGSIGASSTPSR).

It belongs to the universal ribosomal protein uL3 family. In terms of assembly, part of the 50S ribosomal subunit. Forms a cluster with proteins L14 and L19.

Functionally, one of the primary rRNA binding proteins, it binds directly near the 3'-end of the 23S rRNA, where it nucleates assembly of the 50S subunit. In Leifsonia xyli subsp. xyli (strain CTCB07), this protein is Large ribosomal subunit protein uL3.